A 258-amino-acid polypeptide reads, in one-letter code: Thrombin-like enzyme ancrod-2 (258 aa).

A signal peptide spans 1–18 (MVLIRVLANLVILQLSYA). The propeptide occupies 19–24 (QKSSEL). The 227-residue stretch at 25 to 251 (VIGGDECNIN…HLHWILSIMA (227 aa)) folds into the Peptidase S1 domain. 6 cysteine pairs are disulfide-bonded: Cys31-Cys165, Cys52-Cys68, Cys102-Cys256, Cys144-Cys212, Cys176-Cys191, and Cys202-Cys227. Active-site charge relay system residues include His67 and Asp112. N-linked (GlcNAc...) asparagine glycans are attached at residues Asn123 and Asn172. The Charge relay system role is filled by Ser206. An N-linked (GlcNAc...) asparagine glycan is attached at Asn253.

The protein belongs to the peptidase S1 family. Snake venom subfamily. As to quaternary structure, monomer. Expressed by the venom gland.

It localises to the secreted. The enzyme catalyses Selective cleavage of Arg-|-Xaa bond in fibrinogen, to form fibrin, and release fibrinopeptide A. The specificity of further degradation of fibrinogen varies with species origin of the enzyme.. Functionally, thrombin-like snake venom serine protease. Cleaves fibrinogen (FGA) to split of fibrinopeptides AM, AO, and AY; the aberrant fibrinogen is then incapable of being cross-linked, forming easily dispersible clots. The chain is Thrombin-like enzyme ancrod-2 from Calloselasma rhodostoma (Malayan pit viper).